A 248-amino-acid polypeptide reads, in one-letter code: Granzyme E (248 aa).

Residues 1–18 form the signal peptide; it reads MPPVLILLTLLLPLGAGA. Positions 19–20 are excised as a propeptide; the sequence is EE. The 226-residue stretch at 21–246 folds into the Peptidase S1 domain; it reads IIGGHVVKPH…FLPWISRNMK (226 aa). Cysteine 50 and cysteine 66 are oxidised to a cystine. Histidine 65 acts as the Charge relay system in catalysis. N-linked (GlcNAc...) asparagine glycans are attached at residues asparagine 68 and asparagine 102. The active-site Charge relay system is the aspartate 109. 2 disulfides stabilise this stretch: cysteine 143/cysteine 210 and cysteine 175/cysteine 189. Asparagine 154 is a glycosylation site (N-linked (GlcNAc...) asparagine). The active-site Charge relay system is the serine 204. The N-linked (GlcNAc...) asparagine glycan is linked to asparagine 223.

The protein belongs to the peptidase S1 family. Granzyme subfamily.

It is found in the cytolytic granule. This enzyme is probably necessary for target cell lysis in cell-mediated immune responses. This is Granzyme E (Gzme) from Mus musculus (Mouse).